The primary structure comprises 479 residues: Ribosomal RNA small subunit methyltransferase F (479 aa).

S-adenosyl-L-methionine contacts are provided by residues 125-131 (AAAPGSK), E149, D176, and D194. Catalysis depends on C247, which acts as the Nucleophile.

This sequence belongs to the class I-like SAM-binding methyltransferase superfamily. RsmB/NOP family.

The protein localises to the cytoplasm. The catalysed reaction is cytidine(1407) in 16S rRNA + S-adenosyl-L-methionine = 5-methylcytidine(1407) in 16S rRNA + S-adenosyl-L-homocysteine + H(+). Its function is as follows. Specifically methylates the cytosine at position 1407 (m5C1407) of 16S rRNA. In Citrobacter koseri (strain ATCC BAA-895 / CDC 4225-83 / SGSC4696), this protein is Ribosomal RNA small subunit methyltransferase F.